A 489-amino-acid chain; its full sequence is Dentin matrix acidic phosphoprotein 1 (489 aa).

The N-terminal stretch at 1–16 (MKTVILLTFLWGLSCA) is a signal peptide. A disordered region spans residues 22 to 489 (YQNTESESSE…QDDNDCQDGY (468 aa)). Over residues 82 to 100 (DKEEDEDDSGDDTFGDEDN) the composition is skewed to acidic residues. Residues 123–138 (DTTQSSEDSTSQENSA) are compositionally biased toward low complexity. Composition is skewed to basic and acidic residues over residues 143–159 (SDSK…RPEA) and 217–227 (RSEESKGDHEP). Polar residues predominate over residues 263–274 (DSNSRETQSVST). Over residues 275–287 (EDFRSKEESRSET) the composition is skewed to basic and acidic residues. Over residues 316–332 (EPSQESSSESQEGVASE) the composition is skewed to low complexity. Positions 334-336 (RGD) match the Cell attachment site motif. The N-linked (GlcNAc...) asparagine glycan is linked to N340. Basic and acidic residues predominate over residues 346 to 358 (DQRDSESSEEDRL). Residue N378 is glycosylated (N-linked (GlcNAc...) asparagine). Over residues 386-397 (ESQESAQDEDSS) the composition is skewed to acidic residues. Low complexity predominate over residues 398-419 (SQEGLQSQSASRESRSQESQSE). The segment covering 420 to 442 (QDSRSEENRDSDSQDSSRSKEES) has biased composition (basic and acidic residues). N-linked (GlcNAc...) asparagine glycosylation occurs at N443. Basic and acidic residues predominate over residues 453-478 (EDNHPKNIEADNRKLIVDAYHNKPIG). The segment covering 479–489 (DQDDNDCQDGY) has biased composition (acidic residues).

As to quaternary structure, interacts with importin alpha. Phosphorylated in the cytosol and extracellular matrix and unphosphorylated in the nucleus. Phosphorylation is necessary for nucleocytoplasmic transport and may be catalyzed by a nuclear isoform of CK2 and can be augmented by calcium. Phosphorylated (in vitro) by FAM20C in the extracellular medium at sites within the S-x-E/pS motif. As to expression, expressed in tooth particularly in odontoblast and ameloblast.

It is found in the nucleus. Its subcellular location is the cytoplasm. The protein localises to the secreted. It localises to the extracellular space. The protein resides in the extracellular matrix. In terms of biological role, may have a dual function during osteoblast differentiation. In the nucleus of undifferentiated osteoblasts, unphosphorylated form acts as a transcriptional component for activation of osteoblast-specific genes like osteocalcin. During the osteoblast to osteocyte transition phase it is phosphorylated and exported into the extracellular matrix, where it regulates nucleation of hydroxyapatite. The polypeptide is Dentin matrix acidic phosphoprotein 1 (Dmp1) (Rattus norvegicus (Rat)).